The chain runs to 577 residues: Aspartate--tRNA ligase (577 aa).

Position 169 (Glu-169) interacts with L-aspartate. The aspartate stretch occupies residues 193–196 (QLYK). Arg-215 contacts L-aspartate. Residues 215–217 (RDE) and Gln-224 contribute to the ATP site. His-440 is an L-aspartate binding site. Glu-474 lines the ATP pocket. Arg-481 is an L-aspartate binding site. 526–529 (GIDR) contacts ATP.

Belongs to the class-II aminoacyl-tRNA synthetase family. Type 1 subfamily. Homodimer.

It localises to the cytoplasm. The catalysed reaction is tRNA(Asp) + L-aspartate + ATP = L-aspartyl-tRNA(Asp) + AMP + diphosphate. Functionally, catalyzes the attachment of L-aspartate to tRNA(Asp) in a two-step reaction: L-aspartate is first activated by ATP to form Asp-AMP and then transferred to the acceptor end of tRNA(Asp). The polypeptide is Aspartate--tRNA ligase (Mesoplasma florum (strain ATCC 33453 / NBRC 100688 / NCTC 11704 / L1) (Acholeplasma florum)).